The sequence spans 698 residues: Sialic acid-binding Ig-like lectin 11 (698 aa).

Positions Met-1–Ser-27 are cleaved as a signal peptide. Topologically, residues Leu-28–Leu-561 are extracellular. In terms of domain architecture, Ig-like V-type spans Asp-31–Glu-134. Cystine bridges form between Cys-49–Cys-186, Cys-54–Cys-114, and Cys-177–Cys-228. Asn-55 and Asn-90 each carry an N-linked (GlcNAc...) asparagine glycan. Arg-132 provides a ligand contact to N-acetylneuraminate. 3 consecutive Ig-like C2-type domains span residues Pro-159 to Arg-244, Pro-251 to Ser-350, and Pro-355 to Ser-452. A glycan (N-linked (GlcNAc...) asparagine) is linked at Asn-262. A disulfide bridge connects residues Cys-287 and Cys-334. Asn-366 and Asn-375 each carry an N-linked (GlcNAc...) asparagine glycan. Cys-391 and Cys-436 are oxidised to a cystine. N-linked (GlcNAc...) asparagine glycans are attached at residues Asn-497 and Asn-515. Residues Gly-562–Val-584 traverse the membrane as a helical segment. Over Lys-585–Lys-698 the chain is Cytoplasmic. Positions Ala-596 to Gly-635 are disordered. The ITIM motif signature appears at Leu-642 to Leu-647. Tyr-668 carries the phosphotyrosine modification. A disordered region spans residues Thr-675–Lys-698.

This sequence belongs to the immunoglobulin superfamily. SIGLEC (sialic acid binding Ig-like lectin) family. As to quaternary structure, interacts with PTPN6/SHP-1 and PTPN11/SHP-2 upon phosphorylation. In terms of processing, phosphorylated on tyrosine residues. Expressed by macrophages in various tissues including Kupffer cells. Also found in brain microglia.

The protein resides in the membrane. Putative adhesion molecule that mediates sialic-acid dependent binding to cells. Preferentially binds to alpha-2,8-linked sialic acid. The sialic acid recognition site may be masked by cis interactions with sialic acids on the same cell surface. In the immune response, may act as an inhibitory receptor upon ligand induced tyrosine phosphorylation by recruiting cytoplasmic phosphatase(s) via their SH2 domain(s) that block signal transduction through dephosphorylation of signaling molecules. The chain is Sialic acid-binding Ig-like lectin 11 (SIGLEC11) from Homo sapiens (Human).